The sequence spans 94 residues: uncharacterized protein (94 aa).

This sequence to M.tuberculosis Rv2632c.

This is an uncharacterized protein from Mycobacterium tuberculosis (strain CDC 1551 / Oshkosh).